Here is a 196-residue protein sequence, read N- to C-terminus: Molybdenum cofactor guanylyltransferase (196 aa).

GTP-binding positions include 10-12 (LAG), Lys23, Asn51, Asp69, and Asp99. A Mg(2+)-binding site is contributed by Asp99.

The protein belongs to the MobA family. Monomer. It depends on Mg(2+) as a cofactor.

The protein localises to the cytoplasm. It catalyses the reaction Mo-molybdopterin + GTP + H(+) = Mo-molybdopterin guanine dinucleotide + diphosphate. Transfers a GMP moiety from GTP to Mo-molybdopterin (Mo-MPT) cofactor (Moco or molybdenum cofactor) to form Mo-molybdopterin guanine dinucleotide (Mo-MGD) cofactor. In Shewanella baltica (strain OS155 / ATCC BAA-1091), this protein is Molybdenum cofactor guanylyltransferase.